We begin with the raw amino-acid sequence, 440 residues long: Asparagine--tRNA ligase (440 aa).

This sequence belongs to the class-II aminoacyl-tRNA synthetase family. As to quaternary structure, homodimer.

It localises to the cytoplasm. It catalyses the reaction tRNA(Asn) + L-asparagine + ATP = L-asparaginyl-tRNA(Asn) + AMP + diphosphate + H(+). This chain is Asparagine--tRNA ligase, found in Chloroflexus aurantiacus (strain ATCC 29364 / DSM 637 / Y-400-fl).